A 146-amino-acid polypeptide reads, in one-letter code: MLAAALRRCTAAAAARGLLHPVSAPSPAAAVCSIRCYSHGSHETDEEFDARWVTYFNKPDIDAWELRKGMNTLVGYDLVPEPKIIDAALRACRRLNDFASAVRILEVVKDKAGPHKEIYPYVIQELRPTLNELGISTPEELGLDKV.

Residues 1–37 constitute a mitochondrion transit peptide; it reads MLAAALRRCTAAAAARGLLHPVSAPSPAAAVCSIRCY. The short motif at 2 to 16 is the SIFI-degron element; it reads LAAALRRCTAAAAAR. Residues lysine 83 and lysine 109 each carry the N6-acetyllysine modification. Threonine 137 carries the phosphothreonine modification.

Component of the cytochrome c oxidase (complex IV, CIV), a multisubunit enzyme composed of 14 subunits. The complex is composed of a catalytic core of 3 subunits MT-CO1, MT-CO2 and MT-CO3, encoded in the mitochondrial DNA, and 11 supernumerary subunits COX4I, COX5A, COX5B, COX6A, COX6B, COX6C, COX7A, COX7B, COX7C, COX8 and NDUFA4, which are encoded in the nuclear genome. The complex exists as a monomer or a dimer and forms supercomplexes (SCs) in the inner mitochondrial membrane with NADH-ubiquinone oxidoreductase (complex I, CI) and ubiquinol-cytochrome c oxidoreductase (cytochrome b-c1 complex, complex III, CIII), resulting in different assemblies (supercomplex SCI(1)III(2)IV(1) and megacomplex MCI(2)III(2)IV(2)). Interacts with AFG1L. Interacts with RAB5IF. In terms of processing, in response to mitochondrial stress, the precursor protein is ubiquitinated by the SIFI complex in the cytoplasm before mitochondrial import, leading to its degradation. Within the SIFI complex, UBR4 initiates ubiquitin chain that are further elongated or branched by KCMF1. As to expression, expressed in the head of epididymal sperm but not in testicular sperm (at protein level).

It is found in the mitochondrion inner membrane. It functions in the pathway energy metabolism; oxidative phosphorylation. Functionally, component of the cytochrome c oxidase, the last enzyme in the mitochondrial electron transport chain which drives oxidative phosphorylation. The respiratory chain contains 3 multisubunit complexes succinate dehydrogenase (complex II, CII), ubiquinol-cytochrome c oxidoreductase (cytochrome b-c1 complex, complex III, CIII) and cytochrome c oxidase (complex IV, CIV), that cooperate to transfer electrons derived from NADH and succinate to molecular oxygen, creating an electrochemical gradient over the inner membrane that drives transmembrane transport and the ATP synthase. Cytochrome c oxidase is the component of the respiratory chain that catalyzes the reduction of oxygen to water. Electrons originating from reduced cytochrome c in the intermembrane space (IMS) are transferred via the dinuclear copper A center (CU(A)) of subunit 2 and heme A of subunit 1 to the active site in subunit 1, a binuclear center (BNC) formed by heme A3 and copper B (CU(B)). The BNC reduces molecular oxygen to 2 water molecules using 4 electrons from cytochrome c in the IMS and 4 protons from the mitochondrial matrix. The sequence is that of Cytochrome c oxidase subunit 5A, mitochondrial (Cox5a) from Rattus norvegicus (Rat).